The chain runs to 220 residues: 7-cyano-7-deazaguanine synthase (220 aa).

Phe-10–Leu-20 is an ATP binding site. Residues Cys-186, Cys-195, Cys-198, and Cys-201 each contribute to the Zn(2+) site.

Belongs to the QueC family. Homodimer. Requires Zn(2+) as cofactor.

It carries out the reaction 7-carboxy-7-deazaguanine + NH4(+) + ATP = 7-cyano-7-deazaguanine + ADP + phosphate + H2O + H(+). It participates in purine metabolism; 7-cyano-7-deazaguanine biosynthesis. Its function is as follows. Catalyzes the ATP-dependent conversion of 7-carboxy-7-deazaguanine (CDG) to 7-cyano-7-deazaguanine (preQ(0)). The polypeptide is 7-cyano-7-deazaguanine synthase (Bacillus cereus (strain G9842)).